The following is a 70-amino-acid chain: UPF0337 protein BT9727_3385 (70 aa).

It belongs to the UPF0337 (CsbD) family.

This is UPF0337 protein BT9727_3385 from Bacillus thuringiensis subsp. konkukian (strain 97-27).